We begin with the raw amino-acid sequence, 390 residues long: Phosphopentomutase (390 aa).

Residues D12, D285, H290, D326, H327, and H338 each coordinate Mn(2+).

The protein belongs to the phosphopentomutase family. Requires Mn(2+) as cofactor.

Its subcellular location is the cytoplasm. It catalyses the reaction 2-deoxy-alpha-D-ribose 1-phosphate = 2-deoxy-D-ribose 5-phosphate. The catalysed reaction is alpha-D-ribose 1-phosphate = D-ribose 5-phosphate. It functions in the pathway carbohydrate degradation; 2-deoxy-D-ribose 1-phosphate degradation; D-glyceraldehyde 3-phosphate and acetaldehyde from 2-deoxy-alpha-D-ribose 1-phosphate: step 1/2. Functionally, isomerase that catalyzes the conversion of deoxy-ribose 1-phosphate (dRib-1-P) and ribose 1-phosphate (Rib-1-P) to deoxy-ribose 5-phosphate (dRib-5-P) and ribose 5-phosphate (Rib-5-P), respectively. The protein is Phosphopentomutase of Brevibacillus brevis (strain 47 / JCM 6285 / NBRC 100599).